The primary structure comprises 167 residues: Small ribosomal subunit protein uS3m (167 aa).

A mitochondrion-targeting transit peptide spans 1–35 (MAASVCSGLLGPRVLSWSRELPCAWRALHTSPVCA).

It belongs to the universal ribosomal protein uS3 family. Component of the mitochondrial small ribosomal subunit (mt-SSU). Mature mammalian 55S mitochondrial ribosomes consist of a small (28S) and a large (39S) subunit. The 28S small subunit contains a 12S ribosomal RNA (12S mt-rRNA) and 30 different proteins. The 39S large subunit contains a 16S rRNA (16S mt-rRNA), a copy of mitochondrial valine transfer RNA (mt-tRNA(Val)), which plays an integral structural role, and 52 different proteins.

The protein localises to the mitochondrion. The sequence is that of Small ribosomal subunit protein uS3m (MRPS24) from Homo sapiens (Human).